Here is a 342-residue protein sequence, read N- to C-terminus: Dysbindin (342 aa).

A Phosphoserine modification is found at S11. The stretch at 83–180 (LSAHWEKKQA…AELDAEHSQK (98 aa)) forms a coiled coil. A Nuclear export signal motif is present at residues 243–256 (LMDISDQEALDVFL). The segment at 263–342 (NTLLSPISGP…ATLHSDDSDS (80 aa)) is disordered. The span at 286-305 (PTPSQAPATPPSSSSPGTDP) shows a compositional bias: low complexity. S316, S321, and S340 each carry phosphoserine.

It belongs to the dysbindin family. In terms of assembly, interacts (via its coiled coil domain) with KXD1. Interacts with CMYA5, PI4K2 and RNF151. Component of the biogenesis of lysosome-related organelles complex 1 (BLOC-1) composed of at least BLOC1S1, BLOC1S2, BLOC1S3, BLOC1S4, BLOC1S5, BLOC1S6, DTNBP1/BLOC1S7 and SNAPIN/BLOC1S8. Interacts directly in the complex with BLOC1S5, BLOC1S6 and SNAPIN/BLOC1S8. The BLOC-1 complex associates with the AP-3 protein complex and membrane protein cargos. This BLOC-1 complex also associates with the BLOC-2 complex in endosomes. Binds to DTNA and DTNB but may not be a physiological binding partner. Interacts with the DNA-dependent protein kinase complex DNA-PK; the interaction phosphorylates DTNBP1 in vitro. Interacts directly in this complex with XRCC5 and XRCC6. Interacts with AP3M1, AP3B2 and TRIM32. Interacts with XPO1; the interaction exports DTNBP1 out of the nucleus. In terms of processing, ubiquitinated by TRIM32. Ubiquitination leads to DTNBP1 degradation.

Its subcellular location is the cytoplasm. The protein localises to the cytoplasmic vesicle membrane. It is found in the cytoplasmic vesicle. It localises to the secretory vesicle. The protein resides in the synaptic vesicle membrane. Its subcellular location is the endosome membrane. The protein localises to the melanosome membrane. It is found in the nucleus. It localises to the postsynaptic density. The protein resides in the presynaptic cell membrane. Its subcellular location is the endoplasmic reticulum. In terms of biological role, component of the BLOC-1 complex, a complex that is required for normal biogenesis of lysosome-related organelles (LRO), such as platelet dense granules and melanosomes. In concert with the AP-3 complex, the BLOC-1 complex is required to target membrane protein cargos into vesicles assembled at cell bodies for delivery into neurites and nerve terminals. The BLOC-1 complex, in association with SNARE proteins, is also proposed to be involved in neurite extension. Associates with the BLOC-2 complex to facilitate the transport of TYRP1 independent of AP-3 function. Plays a role in synaptic vesicle trafficking and in neurotransmitter release. Plays a role in the regulation of cell surface exposure of DRD2. May play a role in actin cytoskeleton reorganization and neurite outgrowth. May modulate MAPK8 phosphorylation. Appears to promote neuronal transmission and viability through regulating the expression of SNAP25 and SYN1, modulating PI3-kinase-Akt signaling and influencing glutamatergic release. Regulates the expression of SYN1 through binding to its promoter. Modulates prefrontal cortical activity via the dopamine/D2 pathway. The protein is Dysbindin (DTNBP1) of Bos taurus (Bovine).